The sequence spans 260 residues: Adenosylcobinamide-GDP ribazoletransferase (260 aa).

Helical transmembrane passes span 3 to 23 (APLW…LPAW), 36 to 56 (FAPW…LVLI), 60 to 80 (WPTS…SGGL), 108 to 128 (VGAS…AALL), 133 to 153 (LAPL…LWAM), 180 to 200 (ALPA…LMIV), 206 to 226 (MVLM…PELL), and 239 to 259 (GASV…LLTA).

The protein belongs to the CobS family. Mg(2+) serves as cofactor.

It localises to the cell inner membrane. It carries out the reaction alpha-ribazole + adenosylcob(III)inamide-GDP = adenosylcob(III)alamin + GMP + H(+). It catalyses the reaction alpha-ribazole 5'-phosphate + adenosylcob(III)inamide-GDP = adenosylcob(III)alamin 5'-phosphate + GMP + H(+). Its pathway is cofactor biosynthesis; adenosylcobalamin biosynthesis; adenosylcobalamin from cob(II)yrinate a,c-diamide: step 7/7. In terms of biological role, joins adenosylcobinamide-GDP and alpha-ribazole to generate adenosylcobalamin (Ado-cobalamin). Also synthesizes adenosylcobalamin 5'-phosphate from adenosylcobinamide-GDP and alpha-ribazole 5'-phosphate. This is Adenosylcobinamide-GDP ribazoletransferase from Prochlorococcus marinus (strain MIT 9303).